The sequence spans 226 residues: Phosphoribosylformylglycinamidine synthase subunit PurQ (226 aa).

One can recognise a Glutamine amidotransferase type-1 domain in the interval 2 to 226 (KIAVVVFPGS…LENGRIKVEA (225 aa)). Cys-86 functions as the Nucleophile in the catalytic mechanism. Active-site residues include His-195 and Glu-197.

Part of the FGAM synthase complex composed of 1 PurL, 1 PurQ and 2 PurS subunits.

The protein resides in the cytoplasm. It catalyses the reaction N(2)-formyl-N(1)-(5-phospho-beta-D-ribosyl)glycinamide + L-glutamine + ATP + H2O = 2-formamido-N(1)-(5-O-phospho-beta-D-ribosyl)acetamidine + L-glutamate + ADP + phosphate + H(+). The enzyme catalyses L-glutamine + H2O = L-glutamate + NH4(+). It functions in the pathway purine metabolism; IMP biosynthesis via de novo pathway; 5-amino-1-(5-phospho-D-ribosyl)imidazole from N(2)-formyl-N(1)-(5-phospho-D-ribosyl)glycinamide: step 1/2. Part of the phosphoribosylformylglycinamidine synthase complex involved in the purines biosynthetic pathway. Catalyzes the ATP-dependent conversion of formylglycinamide ribonucleotide (FGAR) and glutamine to yield formylglycinamidine ribonucleotide (FGAM) and glutamate. The FGAM synthase complex is composed of three subunits. PurQ produces an ammonia molecule by converting glutamine to glutamate. PurL transfers the ammonia molecule to FGAR to form FGAM in an ATP-dependent manner. PurS interacts with PurQ and PurL and is thought to assist in the transfer of the ammonia molecule from PurQ to PurL. In Limosilactobacillus reuteri (strain DSM 20016) (Lactobacillus reuteri), this protein is Phosphoribosylformylglycinamidine synthase subunit PurQ.